The following is an 84-amino-acid chain: Putative membrane protein insertion efficiency factor (84 aa).

The protein belongs to the UPF0161 family.

The protein localises to the cell inner membrane. In terms of biological role, could be involved in insertion of integral membrane proteins into the membrane. This chain is Putative membrane protein insertion efficiency factor, found in Shewanella denitrificans (strain OS217 / ATCC BAA-1090 / DSM 15013).